The chain runs to 213 residues: Protein-L-isoaspartate O-methyltransferase (213 aa).

S60 is a catalytic residue.

It belongs to the methyltransferase superfamily. L-isoaspartyl/D-aspartyl protein methyltransferase family.

Its subcellular location is the cytoplasm. It catalyses the reaction [protein]-L-isoaspartate + S-adenosyl-L-methionine = [protein]-L-isoaspartate alpha-methyl ester + S-adenosyl-L-homocysteine. Its function is as follows. Catalyzes the methyl esterification of L-isoaspartyl residues in peptides and proteins that result from spontaneous decomposition of normal L-aspartyl and L-asparaginyl residues. It plays a role in the repair and/or degradation of damaged proteins. This Roseobacter denitrificans (strain ATCC 33942 / OCh 114) (Erythrobacter sp. (strain OCh 114)) protein is Protein-L-isoaspartate O-methyltransferase.